Here is a 139-residue protein sequence, read N- to C-terminus: MGQTIRFGVSLNSELLEKFDALCDEKSYQTRSEAIRDLIRGVLVQKEWEQSDKEVAGVLTLVYDHHTSDLAQRLIETQHEQHDVILSSMHVHLDHHNCLEALVLKGPGEAVQRLSQKLISTRGVKYGKLTLATTGQEIV.

Ni(2+) is bound by residues H79, H90, H92, and C98.

Belongs to the transcriptional regulatory CopG/NikR family. Requires Ni(2+) as cofactor.

Transcriptional regulator. This Solidesulfovibrio magneticus (strain ATCC 700980 / DSM 13731 / RS-1) (Desulfovibrio magneticus) protein is Putative nickel-responsive regulator.